A 352-amino-acid chain; its full sequence is UDP-N-acetylglucosamine--N-acetylmuramyl-(pentapeptide) pyrophosphoryl-undecaprenol N-acetylglucosamine transferase (352 aa).

UDP-N-acetyl-alpha-D-glucosamine is bound by residues Ser195 and Gln287.

Belongs to the glycosyltransferase 28 family. MurG subfamily.

The protein localises to the cell membrane. The enzyme catalyses Mur2Ac(oyl-L-Ala-gamma-D-Glu-L-Lys-D-Ala-D-Ala)-di-trans,octa-cis-undecaprenyl diphosphate + UDP-N-acetyl-alpha-D-glucosamine = beta-D-GlcNAc-(1-&gt;4)-Mur2Ac(oyl-L-Ala-gamma-D-Glu-L-Lys-D-Ala-D-Ala)-di-trans,octa-cis-undecaprenyl diphosphate + UDP + H(+). Its pathway is cell wall biogenesis; peptidoglycan biosynthesis. In terms of biological role, cell wall formation. Catalyzes the transfer of a GlcNAc subunit on undecaprenyl-pyrophosphoryl-MurNAc-pentapeptide (lipid intermediate I) to form undecaprenyl-pyrophosphoryl-MurNAc-(pentapeptide)GlcNAc (lipid intermediate II). This Streptococcus pneumoniae (strain Taiwan19F-14) protein is UDP-N-acetylglucosamine--N-acetylmuramyl-(pentapeptide) pyrophosphoryl-undecaprenol N-acetylglucosamine transferase.